Consider the following 344-residue polypeptide: N-acetyl-gamma-glutamyl-phosphate reductase (344 aa).

Cys150 is an active-site residue.

It belongs to the NAGSA dehydrogenase family. Type 1 subfamily.

Its subcellular location is the cytoplasm. It carries out the reaction N-acetyl-L-glutamate 5-semialdehyde + phosphate + NADP(+) = N-acetyl-L-glutamyl 5-phosphate + NADPH + H(+). It functions in the pathway amino-acid biosynthesis; L-arginine biosynthesis; N(2)-acetyl-L-ornithine from L-glutamate: step 3/4. In terms of biological role, catalyzes the NADPH-dependent reduction of N-acetyl-5-glutamyl phosphate to yield N-acetyl-L-glutamate 5-semialdehyde. This Pseudomonas fluorescens (strain Pf0-1) protein is N-acetyl-gamma-glutamyl-phosphate reductase.